Consider the following 156-residue polypeptide: Small ribosomal subunit protein uS7 (156 aa).

It belongs to the universal ribosomal protein uS7 family. As to quaternary structure, part of the 30S ribosomal subunit. Contacts proteins S9 and S11.

One of the primary rRNA binding proteins, it binds directly to 16S rRNA where it nucleates assembly of the head domain of the 30S subunit. Is located at the subunit interface close to the decoding center, probably blocks exit of the E-site tRNA. This chain is Small ribosomal subunit protein uS7, found in Corynebacterium jeikeium (strain K411).